We begin with the raw amino-acid sequence, 917 residues long: Protein translocase subunit SecA (917 aa).

Residues glutamine 87, 105-109 (GEGKT), and aspartate 501 each bind ATP. 4 residues coordinate Zn(2+): cysteine 901, cysteine 903, cysteine 912, and histidine 913.

This sequence belongs to the SecA family. In terms of assembly, monomer and homodimer. Part of the essential Sec protein translocation apparatus which comprises SecA, SecYEG and auxiliary proteins SecDF-YajC and YidC. Requires Zn(2+) as cofactor.

The protein localises to the cell inner membrane. Its subcellular location is the cytoplasm. The enzyme catalyses ATP + H2O + cellular proteinSide 1 = ADP + phosphate + cellular proteinSide 2.. Its function is as follows. Part of the Sec protein translocase complex. Interacts with the SecYEG preprotein conducting channel. Has a central role in coupling the hydrolysis of ATP to the transfer of proteins into and across the cell membrane, serving both as a receptor for the preprotein-SecB complex and as an ATP-driven molecular motor driving the stepwise translocation of polypeptide chains across the membrane. The polypeptide is Protein translocase subunit SecA (Granulibacter bethesdensis (strain ATCC BAA-1260 / CGDNIH1)).